We begin with the raw amino-acid sequence, 221 residues long: PKHD-type hydroxylase NATL1_16191 (221 aa).

The 95-residue stretch at 80 to 174 (LIHGVMFTQS…RHVCVGWIQS (95 aa)) folds into the Fe2OG dioxygenase domain. Positions 98, 100, and 155 each coordinate Fe cation. Position 165 (R165) interacts with 2-oxoglutarate.

Fe(2+) is required as a cofactor. The cofactor is L-ascorbate.

In Prochlorococcus marinus (strain NATL1A), this protein is PKHD-type hydroxylase NATL1_16191.